Reading from the N-terminus, the 179-residue chain is Large ribosomal subunit protein uL5 (179 aa).

This sequence belongs to the universal ribosomal protein uL5 family. As to quaternary structure, part of the 50S ribosomal subunit; part of the 5S rRNA/L5/L18/L25 subcomplex. Contacts the 5S rRNA and the P site tRNA. Forms a bridge to the 30S subunit in the 70S ribosome.

Its function is as follows. This is one of the proteins that bind and probably mediate the attachment of the 5S RNA into the large ribosomal subunit, where it forms part of the central protuberance. In the 70S ribosome it contacts protein S13 of the 30S subunit (bridge B1b), connecting the 2 subunits; this bridge is implicated in subunit movement. Contacts the P site tRNA; the 5S rRNA and some of its associated proteins might help stabilize positioning of ribosome-bound tRNAs. This Thermoanaerobacter sp. (strain X514) protein is Large ribosomal subunit protein uL5.